We begin with the raw amino-acid sequence, 101 residues long: Small ribosomal subunit protein uS14 (101 aa).

Residues 1–10 (MAKKSSVEKN) are compositionally biased toward basic and acidic residues. The interval 1–23 (MAKKSSVEKNNRRKRMAKNAAPK) is disordered. A compositionally biased stretch (basic residues) spans 11 to 23 (NRRKRMAKNAAPK).

The protein belongs to the universal ribosomal protein uS14 family. In terms of assembly, part of the 30S ribosomal subunit. Contacts proteins S3 and S10.

Binds 16S rRNA, required for the assembly of 30S particles and may also be responsible for determining the conformation of the 16S rRNA at the A site. The sequence is that of Small ribosomal subunit protein uS14 from Bradyrhizobium sp. (strain BTAi1 / ATCC BAA-1182).